Here is a 550-residue protein sequence, read N- to C-terminus: Hydroxylamine reductase (550 aa).

Positions 3, 6, 18, and 25 each coordinate [2Fe-2S] cluster. Hybrid [4Fe-2O-2S] cluster is bound by residues His-249, Glu-273, Cys-317, Cys-405, Cys-433, Cys-458, Glu-492, and Lys-494. At Cys-405 the chain carries Cysteine persulfide.

Belongs to the HCP family. [2Fe-2S] cluster serves as cofactor. Requires hybrid [4Fe-2O-2S] cluster as cofactor.

It is found in the cytoplasm. The catalysed reaction is A + NH4(+) + H2O = hydroxylamine + AH2 + H(+). Functionally, catalyzes the reduction of hydroxylamine to form NH(3) and H(2)O. The chain is Hydroxylamine reductase from Shigella flexneri serotype 5b (strain 8401).